Here is a 285-residue protein sequence, read N- to C-terminus: DegV domain-containing protein CA_C3284 (285 aa).

The 278-residue stretch at 3–280 (VKILTDSTSC…PGAIGIAYYT (278 aa)) folds into the DegV domain. The hexadecanoate site is built by Ser59 and Ser91.

May bind long-chain fatty acids, such as palmitate, and may play a role in lipid transport or fatty acid metabolism. This chain is DegV domain-containing protein CA_C3284, found in Clostridium acetobutylicum (strain ATCC 824 / DSM 792 / JCM 1419 / IAM 19013 / LMG 5710 / NBRC 13948 / NRRL B-527 / VKM B-1787 / 2291 / W).